The primary structure comprises 354 residues: uncharacterized protein (354 aa).

Positions 96-130 are disordered; it reads QVCPASAPNGKRAMKIPKVKEPRGENSSKKSSADQ. Positions 113 to 127 are enriched in basic and acidic residues; it reads KVKEPRGENSSKKSS.

This is an uncharacterized protein from Caenorhabditis elegans.